We begin with the raw amino-acid sequence, 156 residues long: Small ribosomal subunit protein uS7 (156 aa).

Belongs to the universal ribosomal protein uS7 family. As to quaternary structure, part of the 30S ribosomal subunit. Contacts proteins S9 and S11.

In terms of biological role, one of the primary rRNA binding proteins, it binds directly to 16S rRNA where it nucleates assembly of the head domain of the 30S subunit. Is located at the subunit interface close to the decoding center, probably blocks exit of the E-site tRNA. The chain is Small ribosomal subunit protein uS7 from Microcystis aeruginosa (strain NIES-843 / IAM M-2473).